Reading from the N-terminus, the 65-residue chain is Small, acid-soluble spore protein C3 (65 aa).

This sequence belongs to the alpha/beta-type SASP family.

In terms of biological role, SASP are bound to spore DNA. They are double-stranded DNA-binding proteins that cause DNA to change to an a-like conformation. They protect the DNA backbone from chemical and enzymatic cleavage and are thus involved in dormant spore's high resistance to UV light. The polypeptide is Small, acid-soluble spore protein C3 (SASP-C3) (Priestia megaterium (Bacillus megaterium)).